A 573-amino-acid chain; its full sequence is O-fucosyltransferase 20 (573 aa).

The Cytoplasmic portion of the chain corresponds to 1-60 (MALSKNSNSNSFNKKKVSYISVPSQIINSLSSSSLQSLLVSPKKSSRSTNRFSFSYRNPR). The chain crosses the membrane as a helical; Signal-anchor for type II membrane protein span at residues 61 to 81 (IWFFTLFLVSLFGMLKLGFNV). The Lumenal segment spans residues 82–573 (DPISLPFSRY…RQQQEQQSDA (492 aa)). Residue asparagine 138 is glycosylated (N-linked (GlcNAc...) asparagine). 344–346 (HLR) contacts substrate. 2 N-linked (GlcNAc...) asparagine glycosylation sites follow: asparagine 385 and asparagine 517. Basic and acidic residues predominate over residues 547-556 (AGKDVTKHPV). Residues 547–573 (AGKDVTKHPVPECMCSDRQQQEQQSDA) form a disordered region. The span at 563-573 (DRQQQEQQSDA) shows a compositional bias: polar residues.

Belongs to the glycosyltransferase GT106 family. As to quaternary structure, interacts with RACK1A. As to expression, highly expressed in shoot apical meristem (SAM) and in young vegetative tissues.

It is found in the golgi apparatus membrane. It functions in the pathway glycan metabolism. May play a role in the biosynthesis of matrix polysaccharides and contribute to the biomechanics and development of the plant cell wall. The protein is O-fucosyltransferase 20 of Arabidopsis thaliana (Mouse-ear cress).